Consider the following 338-residue polypeptide: Anthranilate phosphoribosyltransferase (338 aa).

5-phospho-alpha-D-ribose 1-diphosphate contacts are provided by residues Gly-81, 84–85, Thr-89, 91–94, 109–117, and Ala-121; these read GD, NVST, and KHGNRALSS. Gly-81 is an anthranilate binding site. Ser-93 serves as a coordination point for Mg(2+). Asn-112 contributes to the anthranilate binding site. Arg-167 is an anthranilate binding site. Residues Asp-225 and Glu-226 each coordinate Mg(2+).

Belongs to the anthranilate phosphoribosyltransferase family. In terms of assembly, homodimer. The cofactor is Mg(2+).

It catalyses the reaction N-(5-phospho-beta-D-ribosyl)anthranilate + diphosphate = 5-phospho-alpha-D-ribose 1-diphosphate + anthranilate. It functions in the pathway amino-acid biosynthesis; L-tryptophan biosynthesis; L-tryptophan from chorismate: step 2/5. In terms of biological role, catalyzes the transfer of the phosphoribosyl group of 5-phosphorylribose-1-pyrophosphate (PRPP) to anthranilate to yield N-(5'-phosphoribosyl)-anthranilate (PRA). The sequence is that of Anthranilate phosphoribosyltransferase from Chelativorans sp. (strain BNC1).